The following is a 141-amino-acid chain: U-scoloptoxin(17)-Er3a (141 aa).

The N-terminal stretch at 1–21 (MKSTFALVFGILMVIAHLSFA) is a signal peptide.

It belongs to the scoloptoxin-17 family. Contains 3 disulfide bonds. As to expression, expressed by the venom gland.

The protein resides in the secreted. The sequence is that of U-scoloptoxin(17)-Er3a from Ethmostigmus rubripes (Giant centipede).